A 432-amino-acid chain; its full sequence is Adenylosuccinate synthetase (432 aa).

Residues 13–19 and 41–43 each bind GTP; these read GDEGKGK and GHT. The active-site Proton acceptor is the D14. 2 residues coordinate Mg(2+): D14 and G41. Residues 14 to 17, 39 to 42, T130, R144, Q225, T240, and R304 contribute to the IMP site; these read DEGK and NAGH. The active-site Proton donor is the H42. 300 to 306 is a substrate binding site; sequence ATTGRRR. GTP is bound by residues R306, 332-334, and 415-417; these read KLD and STG.

This sequence belongs to the adenylosuccinate synthetase family. Homodimer. It depends on Mg(2+) as a cofactor.

The protein resides in the cytoplasm. The catalysed reaction is IMP + L-aspartate + GTP = N(6)-(1,2-dicarboxyethyl)-AMP + GDP + phosphate + 2 H(+). Its pathway is purine metabolism; AMP biosynthesis via de novo pathway; AMP from IMP: step 1/2. In terms of biological role, plays an important role in the de novo pathway of purine nucleotide biosynthesis. Catalyzes the first committed step in the biosynthesis of AMP from IMP. This Shigella sonnei (strain Ss046) protein is Adenylosuccinate synthetase.